Reading from the N-terminus, the 442-residue chain is Putative pyrimidine permease RutG (442 aa).

Residues 1 to 57 (MAMFGFPHWQLKSTSTESGVVAPDERLPFAQTAVMGVQHAVAMFGATVLMPILMGLD) are Cytoplasmic-facing. Residues 58 to 78 (PNLSILMSGIGTLLFFFITGG) form a helical membrane-spanning segment. Arg79 is a topological domain (periplasmic). Residues 80 to 100 (VPSYLGSSAAFVGVVIAATGF) form a helical membrane-spanning segment. Over 101-110 (NGQGINPNIS) the chain is Cytoplasmic. A helical transmembrane segment spans residues 111 to 131 (IALGGIIACGLVYTVIGLVVM). Over 132-140 (KIGTRWIER) the chain is Periplasmic. The chain crosses the membrane as a helical span at residues 141-161 (LMPPVVTGAVVMAIGLNLAPI). Over 162-169 (AVKSVSAS) the chain is Cytoplasmic. The chain crosses the membrane as a helical span at residues 170 to 190 (AFDSWMAVMTVLCIGLVAVFT). The Periplasmic segment spans residues 191–196 (RGMIQR). The helical transmembrane segment at 197-217 (LLILVGLIVACLLYGVMTNVL) threads the bilayer. Topologically, residues 218-240 (GLGKAVDFTLVSHAAWFGLPHFS) are cytoplasmic. A helical transmembrane segment spans residues 241–261 (TPAFNGQAMMLIAPVAVILVA). The Periplasmic segment spans residues 262–284 (ENLGHLKAVAGMTGRNMDPYMGR). Residues 285–305 (AFVGDGLATMLSGSVGGSGVT) form a helical membrane-spanning segment. Over 306 to 318 (TYAENIGVMAVTK) the chain is Cytoplasmic. The chain crosses the membrane as a helical span at residues 319–339 (VYSTLVFVAAAVIAMLLGFSP). Residues 340–347 (KFGALIHT) are Periplasmic-facing. A helical transmembrane segment spans residues 348-368 (IPAAVIGGASIVVFGLIAVAG). Residues 369–385 (ARIWVQNRVDLSQNGNL) are Cytoplasmic-facing. 2 helical membrane passes run 386-406 (IMVAVTLVLGAGDFALTLGGF) and 407-427 (TLGGIGTATFGAILLNALLSR). The Cytoplasmic portion of the chain corresponds to 428 to 442 (KLVDVPPPEVVHQEP).

This sequence belongs to the nucleobase:cation symporter-2 (NCS2) (TC 2.A.40) family.

Its subcellular location is the cell inner membrane. Its function is as follows. May function as a proton-driven pyrimidine uptake system. This is Putative pyrimidine permease RutG (rutG) from Escherichia coli (strain K12).